Reading from the N-terminus, the 201-residue chain is Ras-related protein Rab-1B (201 aa).

N-acetylmethionine is present on Met1. 13 residues coordinate GTP: Ser17, Gly18, Val19, Gly20, Lys21, Ser22, Cys23, Tyr33, Thr34, Glu35, Ser36, Ser39, and Thr40. Residue Ser22 coordinates Mg(2+). The short motif at 30–45 (DDTYTESYISTIGVDF) is the Switch 1 element. Positions 40 and 63 each coordinate Mg(2+). Positions 64-83 (TAGQERFRTITSSYYRGAHG) are switch 2 region; Required for interaction with REP1/CHM. Residues 65–80 (AGQERFRTITSSYYRG) carry the Switch 2 motif. Residues Gly66, Asn121, Lys122, Asp124, Ser151, Ala152, and Lys153 each contribute to the GTP site. Residues 173–201 (MGPGAASGGERPNLKIDSTPVKQAGGGCC) are disordered. Residues Cys200 and Cys201 are each lipidated (S-geranylgeranyl cysteine). Cysteine methyl ester is present on Cys201.

The protein belongs to the small GTPase superfamily. Rab family. In terms of assembly, interacts with MICAL1 and MICAL2. Interacts (in GTP-bound form) with MICALCL, MICAL1 and MILCAL3. Interacts with GDI1; the interaction requires the GDP-bound state. Interacts with CHM/REP1; the interaction requires the GDP-bound form and is necessary for prenylation by GGTase II. Interacts with RabGAP TBC1D20. Interacts (in GDP-bound form) with lipid phosphatase MTMR6 (via GRAM domain); the interaction regulates MTMR6 recruitment to the endoplasmic reticulum-Golgi intermediate compartment. Interacts (in GDP-bound form) with lipid phosphatase MTMR7. The cofactor is Mg(2+). Post-translationally, prenylated; by GGTase II, only after interaction of the substrate with Rab escort protein 1 (REP1).

Its subcellular location is the cytoplasm. The protein resides in the membrane. It is found in the preautophagosomal structure membrane. The protein localises to the perinuclear region. The enzyme catalyses GTP + H2O = GDP + phosphate + H(+). Regulated by guanine nucleotide exchange factors (GEFs) which promote the exchange of bound GDP for free GTP. Regulated by GTPase activating proteins (GAPs) including TBC1D20 which increases the GTP hydrolysis activity. Inhibited by GDP dissociation inhibitors (GDIs). Functionally, the small GTPases Rab are key regulators of intracellular membrane trafficking, from the formation of transport vesicles to their fusion with membranes. Rabs cycle between an inactive GDP-bound form and an active GTP-bound form that is able to recruit to membranes different set of downstream effectors directly responsible for vesicle formation, movement, tethering and fusion. Plays a role in the initial events of the autophagic vacuole development which take place at specialized regions of the endoplasmic reticulum. Regulates vesicular transport between the endoplasmic reticulum and successive Golgi compartments. Required to modulate the compacted morphology of the Golgi. Promotes the recruitment of lipid phosphatase MTMR6 to the endoplasmic reticulum-Golgi intermediate compartment. The chain is Ras-related protein Rab-1B (RAB1B) from Bos taurus (Bovine).